The following is a 571-amino-acid chain: Polypeptide N-acetylgalactosaminyltransferase 2 (571 aa).

Topologically, residues 1–6 (MRRRSR) are cytoplasmic. Residues 7-24 (MLLCFAFLWVLGIAYYMY) traverse the membrane as a helical; Signal-anchor for type II membrane protein segment. Residues 25-571 (SGGGSALAGG…QWKFTLNLQQ (547 aa)) are Lumenal-facing. Ser-29 carries O-linked (Xyl...) (chondroitin sulfate) serine glycosylation. Residues 53–66 (KKDLHHSNGEEKAQ) show a composition bias toward basic and acidic residues. Residues 53–74 (KKDLHHSNGEEKAQSMETLPPG) are disordered. 4 disulfide bridges follow: Cys-126-Cys-354, Cys-345-Cys-423, Cys-456-Cys-473, and Cys-496-Cys-513. Residues 135–240 (LPATSVVITF…EHWLEPLLER (106 aa)) are catalytic subdomain A. Substrate-binding residues include Thr-143, Asp-176, and Arg-201. Mn(2+) is bound at residue Asp-224. Ser-225 is a binding site for substrate. Position 226 (His-226) interacts with Mn(2+). The segment at 300–362 (PIKTPMIAGG…PCSRVGHVFR (63 aa)) is catalytic subdomain B. Trp-331 contributes to the substrate binding site. His-359 is a binding site for Mn(2+). Positions 362, 365, and 367 each coordinate substrate. The region spanning 443 to 566 (QDIAFGALQQ…PALSQQWKFT (124 aa)) is the Ricin B-type lectin domain. Phosphoserine is present on Ser-536. Cys-539 and Cys-555 are oxidised to a cystine.

Belongs to the glycosyltransferase 2 family. GalNAc-T subfamily. It depends on Mn(2+) as a cofactor. In terms of tissue distribution, detected in urine (at protein level). Widely expressed.

It localises to the golgi apparatus. The protein resides in the golgi stack membrane. It is found in the secreted. It catalyses the reaction L-seryl-[protein] + UDP-N-acetyl-alpha-D-galactosamine = a 3-O-[N-acetyl-alpha-D-galactosaminyl]-L-seryl-[protein] + UDP + H(+). It carries out the reaction L-threonyl-[protein] + UDP-N-acetyl-alpha-D-galactosamine = a 3-O-[N-acetyl-alpha-D-galactosaminyl]-L-threonyl-[protein] + UDP + H(+). The protein operates within protein modification; protein glycosylation. Its function is as follows. Catalyzes the initial reaction in O-linked oligosaccharide biosynthesis, the transfer of an N-acetyl-D-galactosamine residue to a serine or threonine residue on the protein receptor. Has a broad spectrum of substrates for peptides such as EA2, Muc5AC, Muc1a, Muc1b. Probably involved in O-linked glycosylation of the immunoglobulin A1 (IgA1) hinge region. Involved in O-linked glycosylation of APOC-III, ANGPTL3 and PLTP. It participates in the regulation of HDL-C metabolism. This Homo sapiens (Human) protein is Polypeptide N-acetylgalactosaminyltransferase 2 (GALNT2).